We begin with the raw amino-acid sequence, 107 residues long: uncharacterized protein (107 aa).

A helical transmembrane segment spans residues 62 to 79 (LLVVIVYYFSHVGSFSLA).

It localises to the nucleus membrane. This is an uncharacterized protein from Schizosaccharomyces pombe (strain 972 / ATCC 24843) (Fission yeast).